Here is a 325-residue protein sequence, read N- to C-terminus: NADH-quinone oxidoreductase subunit H (325 aa).

Helical transmembrane passes span 11-31 (ILIS…CGAF), 81-101 (AIFT…FAIV), 114-134 (IGIL…LFAG), 154-174 (LSYE…AGSF), 186-206 (VWNV…GVAV), 237-257 (FFVG…TLFF), 265-285 (LPPF…FILI), and 304-324 (VCLP…LYNA).

It belongs to the complex I subunit 1 family. As to quaternary structure, NDH-1 is composed of 13 different subunits. Subunits NuoA, H, J, K, L, M, N constitute the membrane sector of the complex.

The protein resides in the cell inner membrane. It carries out the reaction a quinone + NADH + 5 H(+)(in) = a quinol + NAD(+) + 4 H(+)(out). Functionally, NDH-1 shuttles electrons from NADH, via FMN and iron-sulfur (Fe-S) centers, to quinones in the respiratory chain. The immediate electron acceptor for the enzyme in this species is believed to be ubiquinone. Couples the redox reaction to proton translocation (for every two electrons transferred, four hydrogen ions are translocated across the cytoplasmic membrane), and thus conserves the redox energy in a proton gradient. This subunit may bind ubiquinone. In Yersinia enterocolitica serotype O:8 / biotype 1B (strain NCTC 13174 / 8081), this protein is NADH-quinone oxidoreductase subunit H.